A 66-amino-acid chain; its full sequence is Beta-toxin Css6 (66 aa).

Residues 1 to 66 (KEGYLVNSYT…VWPLPNKTCN (66 aa)) form the LCN-type CS-alpha/beta domain. Disulfide bonds link Cys12–Cys65, Cys16–Cys41, Cys25–Cys46, and Cys29–Cys48. The residue at position 66 (Asn66) is an Asparagine amide.

The protein belongs to the long (4 C-C) scorpion toxin superfamily. Sodium channel inhibitor family. Beta subfamily. Expressed by the venom gland.

Its subcellular location is the secreted. In terms of biological role, beta toxins bind voltage-independently at site-4 of sodium channels (Nav) and shift the voltage of activation toward more negative potentials thereby affecting sodium channel activation and promoting spontaneous and repetitive firing. The chain is Beta-toxin Css6 from Centruroides suffusus (Durango bark scorpion).